The following is a 129-amino-acid chain: Small ribosomal subunit protein uS12 (129 aa).

The tract at residues 1–25 (MPTYNQLVRFGRKSKTRKTKSPALE) is disordered. The segment covering 10–20 (FGRKSKTRKTK) has biased composition (basic residues). Position 89 is a 3-methylthioaspartic acid (D89). The tract at residues 110–129 (RKQGRSRYGAPSKQVAVTKK) is disordered.

Belongs to the universal ribosomal protein uS12 family. As to quaternary structure, part of the 30S ribosomal subunit. Contacts proteins S8 and S17. May interact with IF1 in the 30S initiation complex.

In terms of biological role, with S4 and S5 plays an important role in translational accuracy. Its function is as follows. Interacts with and stabilizes bases of the 16S rRNA that are involved in tRNA selection in the A site and with the mRNA backbone. Located at the interface of the 30S and 50S subunits, it traverses the body of the 30S subunit contacting proteins on the other side and probably holding the rRNA structure together. The combined cluster of proteins S8, S12 and S17 appears to hold together the shoulder and platform of the 30S subunit. In Rickettsia canadensis (strain McKiel), this protein is Small ribosomal subunit protein uS12.